The following is an 89-amino-acid chain: UPF0335 protein RPC_3979 (89 aa).

It belongs to the UPF0335 family.

In Rhodopseudomonas palustris (strain BisB18), this protein is UPF0335 protein RPC_3979.